We begin with the raw amino-acid sequence, 117 residues long: Glycine cleavage system H-like protein (117 aa).

The region spanning 21 to 103 (IVKLGLSSQM…ESEGWFVVLQ (83 aa)) is the Lipoyl-binding domain. Lysine 62 carries the N6-lipoyllysine modification.

The protein belongs to the GcvH family. It depends on (R)-lipoate as a cofactor.

The protein is Glycine cleavage system H-like protein of Chlamydia trachomatis serovar L2 (strain ATCC VR-902B / DSM 19102 / 434/Bu).